Reading from the N-terminus, the 208-residue chain is MEWWDKSEESLEEEPRKVLAPEPEEIWVAEMLCGLKMKLKRRRVSLVLPEHHEAFNRLLEDPVIKRFLAWDKGLRVSDKYLLAMVIVYFSRAGLPSWQYQCIHFFLALYLANDMEEDDEDPKQNIFYFLYGKTRSRIPLLRKRRFQLCRCMNPRARKNRSQIVLFQKLRFQFFCSMSCRAWVSPEELEEIQAYDPEHWVWARDRARLS.

Belongs to the Speedy/Ringo family.

This chain is Putative speedy protein E7 (SPDYE7P), found in Homo sapiens (Human).